The sequence spans 417 residues: Adenylosuccinate synthetase (417 aa).

GTP contacts are provided by residues 11 to 17 (GDEGKGK) and 39 to 41 (GHT). The active-site Proton acceptor is aspartate 12. Residues aspartate 12 and glycine 39 each contribute to the Mg(2+) site. IMP-binding positions include 12-15 (DEGK), 37-40 (NAGH), threonine 126, arginine 140, glutamine 218, threonine 233, and arginine 295. Histidine 40 (proton donor) is an active-site residue. 291–297 (TVSGRIR) serves as a coordination point for substrate. GTP is bound by residues arginine 297, 323 to 325 (KLD), and 406 to 408 (SNG).

It belongs to the adenylosuccinate synthetase family. In terms of assembly, homodimer. The cofactor is Mg(2+).

The protein localises to the cytoplasm. The catalysed reaction is IMP + L-aspartate + GTP = N(6)-(1,2-dicarboxyethyl)-AMP + GDP + phosphate + 2 H(+). Its pathway is purine metabolism; AMP biosynthesis via de novo pathway; AMP from IMP: step 1/2. In terms of biological role, plays an important role in the de novo pathway of purine nucleotide biosynthesis. Catalyzes the first committed step in the biosynthesis of AMP from IMP. The protein is Adenylosuccinate synthetase of Neorickettsia sennetsu (strain ATCC VR-367 / Miyayama) (Ehrlichia sennetsu).